We begin with the raw amino-acid sequence, 340 residues long: Solute carrier family 35 member G3 (340 aa).

The segment at 11–33 (PDFTQPSPPSTPASLPSKHHHRC) is disordered. 9 consecutive transmembrane segments (helical) span residues 39–59 (TKGL…VGPF), 69–89 (LPSL…ALLL), 107–127 (FLHA…VQVV), 160–180 (AWCG…PGLG), 189–209 (LYTA…SLGL), 223–243 (TVAF…LFVL), 257–277 (CVVA…YAVT), 283–303 (LVCA…YYVL), and 307–327 (VAPS…IITA). An EamA 1 domain is found at 51-176 (LSAGFVGPFS…STLGLIIIVG (126 aa)). The 54-residue stretch at 274–327 (YAVTKAHPALVCAVLHSEVVVALMLQYYVLYETVAPSDIMGAGVVLGSIAIITA) folds into the EamA 2 domain.

This sequence belongs to the SLC35G solute transporter family.

The protein resides in the membrane. The protein is Solute carrier family 35 member G3 (Slc35g3) of Mus musculus (Mouse).